The chain runs to 635 residues: 3-dehydroshikimate dehydratase (635 aa).

Glu-134, Asp-165, Gln-191, and Glu-239 together coordinate a divalent metal cation. 2 VOC domains span residues 295 to 414 and 440 to 590; these read GVEF…LVEQ and RIDH…VYTE. Mg(2+) is bound by residues His-443, His-521, and Glu-599.

The protein belongs to the bacterial two-domain DSD family. In terms of assembly, homodimer. Co(2+) is required as a cofactor. It depends on Ni(2+) as a cofactor. The cofactor is Mg(2+). Requires Mn(2+) as cofactor.

It carries out the reaction 3-dehydroshikimate = 3,4-dihydroxybenzoate + H2O. It participates in aromatic compound metabolism; 3,4-dihydroxybenzoate biosynthesis. In terms of biological role, catalyzes the conversion of 3-dehydroshikimate to protocatechuate (3,4-dihydroxybenzoate), a common intermediate of quinate and shikimate degradation pathways. The polypeptide is 3-dehydroshikimate dehydratase (Pseudomonas putida (strain ATCC 47054 / DSM 6125 / CFBP 8728 / NCIMB 11950 / KT2440)).